Consider the following 364-residue polypeptide: NAD(P)H-quinone oxidoreductase subunit 1, chloroplastic (364 aa).

Transmembrane regions (helical) follow at residues 27-47 (IWLL…VLVI), 98-118 (FSVG…VIPF), 127-147 (ISIG…GLLM), 255-275 (GLFY…VTVL), 301-321 (VFGS…FLFV), and 337-357 (LLNL…LLTT).

It belongs to the complex I subunit 1 family. In terms of assembly, NDH is composed of at least 16 different subunits, 5 of which are encoded in the nucleus.

Its subcellular location is the plastid. It is found in the chloroplast thylakoid membrane. It catalyses the reaction a plastoquinone + NADH + (n+1) H(+)(in) = a plastoquinol + NAD(+) + n H(+)(out). The catalysed reaction is a plastoquinone + NADPH + (n+1) H(+)(in) = a plastoquinol + NADP(+) + n H(+)(out). NDH shuttles electrons from NAD(P)H:plastoquinone, via FMN and iron-sulfur (Fe-S) centers, to quinones in the photosynthetic chain and possibly in a chloroplast respiratory chain. The immediate electron acceptor for the enzyme in this species is believed to be plastoquinone. Couples the redox reaction to proton translocation, and thus conserves the redox energy in a proton gradient. This is NAD(P)H-quinone oxidoreductase subunit 1, chloroplastic from Illicium oligandrum (Star anise).